The chain runs to 1405 residues: Protein crumbs homolog 1 (1405 aa).

The N-terminal stretch at 1–27 (MKLKRTAYLLFLYLSSSLLICIKNSFC) is a signal peptide. At 28–1339 (NKNNTRCLSG…RCELDLADDR (1312 aa)) the chain is on the extracellular side. An EGF-like 1; atypical domain is found at 30-67 (NNTRCLSGPCQNNSTCKHFPQDNNCCLDTANNLDKDCE). Intrachain disulfides connect C34–C45, C39–C54, C55–C66, C73–C84, C78–C95, C97–C106, C113–C124, C118–C133, C135–C144, C151–C162, C156–C171, C173–C182, C189–C200, C194–C209, C211–C220, C227–C238, C232–C247, C249–C258, C265–C276, C270–C285, C287–C297, C304–C315, C309–C324, C326–C335, C342–C353, C347–C382, C384–C393, C400–C411, C405–C420, C422–C437, C444–C455, C449–C468, and C470–C479. N41 carries N-linked (GlcNAc...) asparagine glycosylation. EGF-like domains follow at residues 69 to 107 (LKDP…LNCE) and 109 to 145 (ATNS…RFCE). An EGF-like 4; calcium-binding domain is found at 147 to 183 (DHNECASSPCHNGAMCQDGINGYSCFCVPGYQGRHCD). The 37-residue stretch at 185-221 (EVDECVSDPCKNEAVCLNEIGRYTCVCPQEFSGVNCE) folds into the EGF-like 5; calcium-binding domain. In terms of domain architecture, EGF-like 6; calcium-binding spans 223–259 (EIDECRSQPCLHGATCQDAPGGYSCDCAPGFLGEHCE). EGF-like domains lie at 261-298 (SVNE…MHCE), 300-336 (LIPL…ALCE), 338-394 (DINE…IHCE), 396-438 (DVDE…ENCS), and 440-480 (ILLG…PLCE). Residues 482–669 (VTTLSFGSNG…GLSSNVKAGC (188 aa)) form the Laminin G-like 1 domain. N-linked (GlcNAc...) asparagine glycans are attached at residues N560 and N656. 4 cysteine pairs are disulfide-bonded: C641/C669, C675/C686, C680/C695, and C697/C706. The EGF-like 12 domain occupies 671–707 (GKDWCESQPCQNRGRCINLWQGYQCECDRPYTGSNCL). The Laminin G-like 2 domain occupies 713 to 884 (GRFGQDDSTG…PILVNVTQGC (172 aa)). N-linked (GlcNAc...) asparagine glycosylation is found at N756 and N879. 6 disulfides stabilise this stretch: C850–C884, C890–C901, C895–C910, C912–C921, C927–C938, and C932–C947. EGF-like domains lie at 886 to 922 (GDNT…RACE) and 923 to 959 (QVQW…LSRE). Residues 950 to 1136 (NAVFSGLSRE…VSTNMVLTGC (187 aa)) form the Laminin G-like 3 domain. N-linked (GlcNAc...) asparagine glycans are attached at residues N967, N974, and N999. Intrachain disulfides connect C1095–C1136, C1142–C1153, C1147–C1162, C1164–C1173, C1180–C1190, C1185–C1199, C1201–C1210, C1217–C1228, C1222–C1237, C1239–C1248, C1258–C1273, C1267–C1282, C1284–C1293, C1300–C1311, C1305–C1320, and C1322–C1331. One can recognise an EGF-like 15 domain in the interval 1138–1174 (PSNACHSSPCLHGGNCEDSYSSYRCACLSGWSGTHCE). The 36-residue stretch at 1176–1211 (NIDECFSSPCIHGNCSDGVAAYHCRCEPGYTGVNCE) folds into the EGF-like 16; calcium-binding domain. N1189 carries N-linked (GlcNAc...) asparagine glycosylation. EGF-like domains are found at residues 1213–1249 (DVDN…RFCR) and 1254–1294 (PSTV…EWCE). N1242 and N1264 each carry an N-linked (GlcNAc...) asparagine glycan. Positions 1296 to 1332 (DINECASDPCINGGLCRDLVNRFLCICDVAFAGERCE) constitute an EGF-like 19; calcium-binding domain. Residues 1340 to 1360 (LLGIFTAVGSGTLALFFILLL) form a helical membrane-spanning segment. Over 1361–1405 (AGVASLIASNKRATQGTYSPSGQEKAGPRVEMWIRMPPPALERLI) the chain is Cytoplasmic.

This sequence belongs to the Crumbs protein family. In terms of assembly, component of a complex composed of PALS1, CRB1 and EPB41L5. Within the complex, interacts (via intracellular domain) with PALS1 and EPB41L5 (via FERM domain). Forms a complex with MPP4 and PALS1. Interacts with MPDZ/MUPP1 and MPP4. In terms of processing, glycosylated. Expressed in the kidney, lung, stomach and testis. Expressed in the brain. Expressed in the retina of the eye. Expressed in the outer nuclear layer, photoreceptor layer and inner nuclear layer of the retina. Expressed in Mueller cell radial processes in the inner nuclear layer, in apical processes sclerad to the external limiting membrane, and in the subapical region, adjacent to the adherens junction of retinal photoreceptors. In the brain, expressed in the granular layer of the cerebellum, the hippocampal dentate gyrus, the olfactory bulbs, the subventricular region lining the telencephalic ventricles and the rostral migratory stream. In terms of tissue distribution, ubiquitously expressed.

The protein resides in the apical cell membrane. It localises to the secreted. Its subcellular location is the cell projection. The protein localises to the cilium. It is found in the photoreceptor outer segment. The protein resides in the photoreceptor inner segment. It localises to the cytoplasm. Its subcellular location is the cell junction. The protein localises to the focal adhesion. Functionally, plays a role in photoreceptor morphogenesis in the retina. May maintain cell polarization and adhesion. In terms of biological role, may play a role in epidermal tissue morphogenesis. May function in cell attachment for stratified epithelial organization. This Mus musculus (Mouse) protein is Protein crumbs homolog 1 (Crb1).